A 529-amino-acid chain; its full sequence is Zinc finger protein 572 (529 aa).

The interval M1–H62 is disordered. Glycyl lysine isopeptide (Lys-Gly) (interchain with G-Cter in SUMO2) cross-links involve residues K5 and K6. The span at T26–E35 shows a compositional bias: polar residues. Basic and acidic residues predominate over residues T36–S55. 12 C2H2-type zinc fingers span residues Y132–H154, Y160–H182, Y188–H210, Y216–H238, Y244–H266, Y272–H294, Y300–H322, Y328–H350, Y384–H406, Y412–H434, Y440–H462, and Y468–H490.

The protein belongs to the krueppel C2H2-type zinc-finger protein family.

The protein resides in the nucleus. May be involved in transcriptional regulation. This is Zinc finger protein 572 (ZNF572) from Homo sapiens (Human).